We begin with the raw amino-acid sequence, 142 residues long: Putative pre-16S rRNA nuclease (142 aa).

It belongs to the YqgF nuclease family.

The protein resides in the cytoplasm. Functionally, could be a nuclease involved in processing of the 5'-end of pre-16S rRNA. The polypeptide is Putative pre-16S rRNA nuclease (Staphylococcus haemolyticus (strain JCSC1435)).